A 51-amino-acid chain; its full sequence is uncharacterized protein (51 aa).

This is an uncharacterized protein from Pseudoalteromonas espejiana (Bacteriophage PM2).